Reading from the N-terminus, the 418-residue chain is Actin-related protein 3 (418 aa).

An N-acetylalanine modification is found at Ala-2. N6-acetyllysine occurs at positions 240, 244, 251, and 254.

It belongs to the actin family. ARP3 subfamily. As to quaternary structure, component of the Arp2/3 complex composed of ACTR2/ARP2, ACTR3/ARP3, ARPC1B/p41-ARC, ARPC2/p34-ARC, ARPC3/p21-ARC, ARPC4/p20-ARC and ARPC5/p16-ARC. Interacts with WHDC1. Interacts weakly with MEFV. Interacts with AVIL.

It localises to the cytoplasm. It is found in the cytoskeleton. The protein localises to the cell projection. Its subcellular location is the nucleus. Its function is as follows. ATP-binding component of the Arp2/3 complex, a multiprotein complex that mediates actin polymerization upon stimulation by nucleation-promoting factor (NPF). The Arp2/3 complex mediates the formation of branched actin networks in the cytoplasm, providing the force for cell motility. Seems to contact the pointed end of the daughter actin filament. In podocytes, required for the formation of lamellipodia downstream of AVIL and PLCE1 regulation. In addition to its role in the cytoplasmic cytoskeleton, the Arp2/3 complex also promotes actin polymerization in the nucleus, thereby regulating gene transcription and repair of damaged DNA. The Arp2/3 complex promotes homologous recombination (HR) repair in response to DNA damage by promoting nuclear actin polymerization, leading to drive motility of double-strand breaks (DSBs). Plays a role in ciliogenesis. This Bos taurus (Bovine) protein is Actin-related protein 3 (ACTR3).